Reading from the N-terminus, the 194-residue chain is Probable proteasome subunit beta type-4 (194 aa).

It belongs to the peptidase T1B family. The 26S proteasome consists of a 20S proteasome core and two 19S regulatory subunits. The 20S proteasome core is composed of 28 subunits that are arranged in four stacked rings, resulting in a barrel-shaped structure. The two end rings are each formed by seven alpha subunits, and the two central rings are each formed by seven beta subunits. The catalytic chamber with the active sites is on the inside of the barrel.

The protein resides in the cytoplasm. It is found in the nucleus. In terms of biological role, non-catalytic component of the proteasome, a multicatalytic proteinase complex which is characterized by its ability to cleave peptides with Arg, Phe, Tyr, Leu, and Glu adjacent to the leaving group at neutral or slightly basic pH. The proteasome has an ATP-dependent proteolytic activity. The polypeptide is Probable proteasome subunit beta type-4 (PRO2) (Meyerozyma guilliermondii (strain ATCC 6260 / CBS 566 / DSM 6381 / JCM 1539 / NBRC 10279 / NRRL Y-324) (Yeast)).